A 96-amino-acid polypeptide reads, in one-letter code: Co-chaperonin GroES (96 aa).

The protein belongs to the GroES chaperonin family. In terms of assembly, heptamer of 7 subunits arranged in a ring. Interacts with the chaperonin GroEL.

It is found in the cytoplasm. Together with the chaperonin GroEL, plays an essential role in assisting protein folding. The GroEL-GroES system forms a nano-cage that allows encapsulation of the non-native substrate proteins and provides a physical environment optimized to promote and accelerate protein folding. GroES binds to the apical surface of the GroEL ring, thereby capping the opening of the GroEL channel. This Neisseria meningitidis serogroup B (strain ATCC BAA-335 / MC58) protein is Co-chaperonin GroES.